Consider the following 66-residue polypeptide: Toxin NaTx-4 (66 aa).

Positions 1–64 constitute an LCN-type CS-alpha/beta domain; sequence KEGYLVNKET…TFPIPGKTCS (64 aa). 4 disulfides stabilise this stretch: cysteine 12–cysteine 63, cysteine 16–cysteine 39, cysteine 25–cysteine 44, and cysteine 29–cysteine 46.

The protein belongs to the long (4 C-C) scorpion toxin superfamily. Sodium channel inhibitor family. As to expression, expressed by the venom gland.

The protein resides in the secreted. Probable sodium channel inhibitor. The chain is Toxin NaTx-4 from Centruroides sculpturatus (Arizona bark scorpion).